Reading from the N-terminus, the 580-residue chain is DNA ligase B (580 aa).

Lysine 135 functions as the N6-AMP-lysine intermediate in the catalytic mechanism.

It belongs to the NAD-dependent DNA ligase family. LigB subfamily.

The catalysed reaction is NAD(+) + (deoxyribonucleotide)n-3'-hydroxyl + 5'-phospho-(deoxyribonucleotide)m = (deoxyribonucleotide)n+m + AMP + beta-nicotinamide D-nucleotide.. Its function is as follows. Catalyzes the formation of phosphodiester linkages between 5'-phosphoryl and 3'-hydroxyl groups in double-stranded DNA using NAD as a coenzyme and as the energy source for the reaction. The sequence is that of DNA ligase B from Photorhabdus laumondii subsp. laumondii (strain DSM 15139 / CIP 105565 / TT01) (Photorhabdus luminescens subsp. laumondii).